We begin with the raw amino-acid sequence, 354 residues long: DNA ligase C2 (354 aa).

Lysine 29 functions as the N6-AMP-lysine intermediate in the catalytic mechanism.

This sequence belongs to the ATP-dependent DNA ligase family.

It carries out the reaction ATP + (deoxyribonucleotide)n-3'-hydroxyl + 5'-phospho-(deoxyribonucleotide)m = (deoxyribonucleotide)n+m + AMP + diphosphate.. Its function is as follows. DNA ligase that seals nicks in double-stranded DNA during DNA replication, DNA recombination and DNA repair. Has weak intrinsic nick joining activities and accumulates DNA-adenylate. Acts as a backup for LigD in the Ku-LigD-dependent NHEJ pathway. The chain is DNA ligase C2 (ligC2) from Mycolicibacterium smegmatis (strain ATCC 700084 / mc(2)155) (Mycobacterium smegmatis).